The primary structure comprises 702 residues: Kinesin-like protein KIF3A (702 aa).

Residues 14 to 345 (NVKVVVRCRP…LRYANRAKNI (332 aa)) enclose the Kinesin motor domain. Position 100-107 (100-107 (GQTGTGKT)) interacts with ATP. Positions 355 to 593 (PKDALLRQFQ…LSRELRLQML (239 aa)) form a coiled coil. Disordered stretches follow at residues 372–424 (KKLE…KMIE) and 667–702 (LMKL…SLLQ). Over residues 376–400 (EGEEISGSDISGSEEDDDEEGEVGE) the composition is skewed to acidic residues. Over residues 410 to 424 (DQAGKKKVSPDKMIE) the composition is skewed to basic and acidic residues. The tract at residues 600 to 702 (PRDYQEMIEN…PETVIDSLLQ (103 aa)) is globular. Positions 675 to 690 (TSKGKARPKTGRRKRS) are enriched in basic residues. Ser690 is modified (phosphoserine).

Belongs to the TRAFAC class myosin-kinesin ATPase superfamily. Kinesin family. Kinesin II subfamily. As to quaternary structure, heterodimer of KIF3A and KIF3B. Interacts with CIMAP3. Interacts with CLN3. Interacts with DCTN1. Interacts with FLCN. Interacts with AP3B1.

The protein localises to the cytoplasm. It localises to the cytoskeleton. It is found in the cell projection. Its subcellular location is the cilium. The protein resides in the microtubule organizing center. The protein localises to the centrosome. It localises to the centriole. In terms of biological role, microtubule-based anterograde translocator for membranous organelles. Plus end-directed microtubule sliding activity in vitro. Plays a role in primary cilia formation. Plays a role in centriole cohesion and subdistal appendage organization and function. Regulates the formation of the subdistal appendage via recruitment of DCTN1 to the centriole. Also required for ciliary basal feet formation and microtubule anchoring to mother centriole. This Macaca fascicularis (Crab-eating macaque) protein is Kinesin-like protein KIF3A (KIF3A).